A 740-amino-acid polypeptide reads, in one-letter code: Ethylene receptor 1 (740 aa).

Helical transmembrane passes span 23-43 (ISDF…IYFV), 54-74 (VLVQ…INLW), and 92-112 (VLTA…IPDL). Positions 65 and 69 each coordinate Cu cation. The region spanning 158-307 (DRHTILKTTL…VVADQVAVAL (150 aa)) is the GAF domain. Positions 350 to 588 (VMNHEMRTPM…TFIVKLGIAD (239 aa)) constitute a Histidine kinase domain. Residue His-353 is modified to Phosphohistidine; by autocatalysis. The 118-residue stretch at 614 to 731 (KVLVMDDNGV…KMRSVLSELI (118 aa)) folds into the Response regulatory domain. At Asp-662 the chain carries 4-aspartylphosphate.

The protein belongs to the ethylene receptor family. As to quaternary structure, homodimer; disulfide-linked. The cofactor is Cu cation. In terms of processing, activation probably requires a transfer of a phosphate group between a His in the transmitter domain and an Asp of the receiver domain. As to expression, in seeds and placenta.

Its subcellular location is the endoplasmic reticulum membrane. The enzyme catalyses ATP + protein L-histidine = ADP + protein N-phospho-L-histidine.. Its function is as follows. May act early in the ethylene signal transduction pathway, possibly as an ethylene receptor, or as a regulator of the pathway. This is Ethylene receptor 1 (ETR1) from Cucumis melo var. cantalupensis (Netted muskmelon).